The following is a 102-amino-acid chain: Large ribosomal subunit protein uL24 (102 aa).

This sequence belongs to the universal ribosomal protein uL24 family. In terms of assembly, part of the 50S ribosomal subunit.

One of two assembly initiator proteins, it binds directly to the 5'-end of the 23S rRNA, where it nucleates assembly of the 50S subunit. In terms of biological role, one of the proteins that surrounds the polypeptide exit tunnel on the outside of the subunit. This is Large ribosomal subunit protein uL24 from Herpetosiphon aurantiacus (strain ATCC 23779 / DSM 785 / 114-95).